Consider the following 353-residue polypeptide: Peptide chain release factor 1 (353 aa).

At Q230 the chain carries N5-methylglutamine.

It belongs to the prokaryotic/mitochondrial release factor family. Post-translationally, methylated by PrmC. Methylation increases the termination efficiency of RF1.

It localises to the cytoplasm. In terms of biological role, peptide chain release factor 1 directs the termination of translation in response to the peptide chain termination codons UAG and UAA. The protein is Peptide chain release factor 1 of Leptospira biflexa serovar Patoc (strain Patoc 1 / ATCC 23582 / Paris).